The chain runs to 284 residues: MEMO1 family protein MMP1387 (284 aa).

Belongs to the MEMO1 family.

This Methanococcus maripaludis (strain DSM 14266 / JCM 13030 / NBRC 101832 / S2 / LL) protein is MEMO1 family protein MMP1387.